We begin with the raw amino-acid sequence, 197 residues long: Inner membrane protein RclC (197 aa).

Over 1 to 15 (MEKYLHLLSRGDKIG) the chain is Periplasmic. A helical transmembrane segment spans residues 16-36 (LTLIRLSIAIVFMWIGLLKFV). The Cytoplasmic portion of the chain corresponds to 37-85 (PYEADSITPFVANSPLMSFFYEHPEDYKQYLTHEGEYKPEARAWQTANN). Residues 86 to 106 (TYGFSNGLGVVEVIIALLVLA) traverse the membrane as a helical segment. Residues 107–112 (NPVNRW) are Periplasmic-facing. Residues 113 to 133 (LGLLGGLMAFTTPLVTLSFLI) traverse the membrane as a helical segment. Residues 134 to 197 (TTPEAWVPAL…ESSSTLKTEY (64 aa)) lie on the Cytoplasmic side of the membrane.

Its subcellular location is the cell inner membrane. Probably involved in reactive chlorine species (RCS) stress resistance. The chain is Inner membrane protein RclC (rclC) from Escherichia coli (strain K12).